A 262-amino-acid polypeptide reads, in one-letter code: Acyl-[acyl-carrier-protein]--UDP-N-acetylglucosamine O-acyltransferase (262 aa).

Belongs to the transferase hexapeptide repeat family. LpxA subfamily. As to quaternary structure, homotrimer.

The protein localises to the cytoplasm. The catalysed reaction is a (3R)-hydroxyacyl-[ACP] + UDP-N-acetyl-alpha-D-glucosamine = a UDP-3-O-[(3R)-3-hydroxyacyl]-N-acetyl-alpha-D-glucosamine + holo-[ACP]. The protein operates within glycolipid biosynthesis; lipid IV(A) biosynthesis; lipid IV(A) from (3R)-3-hydroxytetradecanoyl-[acyl-carrier-protein] and UDP-N-acetyl-alpha-D-glucosamine: step 1/6. Functionally, involved in the biosynthesis of lipid A, a phosphorylated glycolipid that anchors the lipopolysaccharide to the outer membrane of the cell. This Yersinia enterocolitica protein is Acyl-[acyl-carrier-protein]--UDP-N-acetylglucosamine O-acyltransferase.